The sequence spans 86 residues: Cell division topological specificity factor (86 aa).

Belongs to the MinE family.

Its function is as follows. Prevents the cell division inhibition by proteins MinC and MinD at internal division sites while permitting inhibition at polar sites. This ensures cell division at the proper site by restricting the formation of a division septum at the midpoint of the long axis of the cell. The polypeptide is Cell division topological specificity factor (Bordetella petrii (strain ATCC BAA-461 / DSM 12804 / CCUG 43448)).